We begin with the raw amino-acid sequence, 111 residues long: Prothymosin alpha-A (111 aa).

The disordered stretch occupies residues 1 to 111 (MSDTAVDASV…IKKQKTDEDD (111 aa)). Residues 9-42 (SVEKTTKDLKAKEKEVVEEAENGKDKPTNGKAEN) show a composition bias toward basic and acidic residues. Acidic residues-rich tracts occupy residues 43–81 (EENGEPEVDNEGDEEDEVDEEDEEDEVEGEDDDDDDEVE) and 90–100 (EDDEDDDDDDV). The span at 101–111 (EIKKQKTDEDD) shows a compositional bias: basic and acidic residues.

Belongs to the pro/parathymosin family.

It localises to the nucleus. This chain is Prothymosin alpha-A (ptma-a), found in Xenopus laevis (African clawed frog).